The primary structure comprises 212 residues: Pyridoxine/pyridoxamine 5'-phosphate oxidase (212 aa).

Substrate contacts are provided by residues 8–11 (RREY) and Lys66. FMN is bound by residues 61-66 (RIVLLK), 76-77 (FT), Arg82, Lys83, and Gln105. The substrate site is built by Tyr123, Arg127, and Ser131. FMN contacts are provided by residues 140–141 (QS) and Trp185. 191-193 (RLH) contributes to the substrate binding site. Residue Arg195 participates in FMN binding.

The protein belongs to the pyridoxamine 5'-phosphate oxidase family. In terms of assembly, homodimer. Requires FMN as cofactor.

It carries out the reaction pyridoxamine 5'-phosphate + O2 + H2O = pyridoxal 5'-phosphate + H2O2 + NH4(+). The catalysed reaction is pyridoxine 5'-phosphate + O2 = pyridoxal 5'-phosphate + H2O2. Its pathway is cofactor metabolism; pyridoxal 5'-phosphate salvage; pyridoxal 5'-phosphate from pyridoxamine 5'-phosphate: step 1/1. It participates in cofactor metabolism; pyridoxal 5'-phosphate salvage; pyridoxal 5'-phosphate from pyridoxine 5'-phosphate: step 1/1. Functionally, catalyzes the oxidation of either pyridoxine 5'-phosphate (PNP) or pyridoxamine 5'-phosphate (PMP) into pyridoxal 5'-phosphate (PLP). This is Pyridoxine/pyridoxamine 5'-phosphate oxidase from Shewanella sp. (strain MR-4).